The chain runs to 142 residues: Nucleoside diphosphate kinase (142 aa).

Residues lysine 9, phenylalanine 57, arginine 85, threonine 91, arginine 102, and asparagine 112 each contribute to the ATP site. The active-site Pros-phosphohistidine intermediate is histidine 115.

The protein belongs to the NDK family. As to quaternary structure, homotetramer. Mg(2+) is required as a cofactor.

Its subcellular location is the cytoplasm. The catalysed reaction is a 2'-deoxyribonucleoside 5'-diphosphate + ATP = a 2'-deoxyribonucleoside 5'-triphosphate + ADP. It catalyses the reaction a ribonucleoside 5'-diphosphate + ATP = a ribonucleoside 5'-triphosphate + ADP. Its function is as follows. Major role in the synthesis of nucleoside triphosphates other than ATP. The ATP gamma phosphate is transferred to the NDP beta phosphate via a ping-pong mechanism, using a phosphorylated active-site intermediate. This is Nucleoside diphosphate kinase from Dehalococcoides mccartyi (strain ATCC BAA-2100 / JCM 16839 / KCTC 5957 / BAV1).